The primary structure comprises 257 residues: Triosephosphate isomerase (257 aa).

Substrate is bound at residue 9–11 (NWK). The Electrophile role is filled by H97. E169 (proton acceptor) is an active-site residue. Residues G175, S214, and 235–236 (GG) contribute to the substrate site.

It belongs to the triosephosphate isomerase family. Homodimer.

The protein localises to the cytoplasm. The enzyme catalyses D-glyceraldehyde 3-phosphate = dihydroxyacetone phosphate. It participates in carbohydrate biosynthesis; gluconeogenesis. The protein operates within carbohydrate degradation; glycolysis; D-glyceraldehyde 3-phosphate from glycerone phosphate: step 1/1. Involved in the gluconeogenesis. Catalyzes stereospecifically the conversion of dihydroxyacetone phosphate (DHAP) to D-glyceraldehyde-3-phosphate (G3P). The sequence is that of Triosephosphate isomerase from Vibrio cholerae serotype O1 (strain ATCC 39315 / El Tor Inaba N16961).